Consider the following 264-residue polypeptide: Low molecular mass lipoprotein PBMHP-12 (264 aa).

Residues 1-16 form the signal peptide; the sequence is MKLLVVFAMCVPAASA.

This sequence belongs to the 30 kDa lipoprotein family.

It is found in the secreted. The chain is Low molecular mass lipoprotein PBMHP-12 from Bombyx mori (Silk moth).